The primary structure comprises 398 residues: Phytoene synthase, chloroplastic (398 aa).

Belongs to the phytoene/squalene synthase family. Monomer.

The protein resides in the plastid. It is found in the chloroplast. The catalysed reaction is 2 (2E,6E,10E)-geranylgeranyl diphosphate = 15-cis-phytoene + 2 diphosphate. Its pathway is carotenoid biosynthesis; phytoene biosynthesis; all-trans-phytoene from geranylgeranyl diphosphate: step 1/1. In terms of biological role, catalyzes the reaction from prephytoene diphosphate to phytoene. This chain is Phytoene synthase, chloroplastic (PSY), found in Daucus carota (Wild carrot).